A 114-amino-acid polypeptide reads, in one-letter code: C-X-C motif chemokine 6 (114 aa).

The first 37 residues, 1–37 (MSLPSSRAARVPGPSGSLCALLALLLLLTPPGPLASA), serve as a signal peptide directing secretion. Cystine bridges form between C49/C75 and C51/C91.

It belongs to the intercrine alpha (chemokine CxC) family.

It is found in the secreted. In terms of biological role, chemotactic for neutrophil granulocytes. Signals through binding and activation of its receptors (CXCR1 and CXCR2). In addition to its chemotactic and angiogenic properties, it has strong antibacterial activity against Gram-positive and Gram-negative bacteria (90-fold-higher when compared to CXCL5 and CXCL7). The polypeptide is C-X-C motif chemokine 6 (CXCL6) (Homo sapiens (Human)).